Here is a 293-residue protein sequence, read N- to C-terminus: Probable xyloglucan endotransglucosylase/hydrolase protein B (293 aa).

A signal peptide spans 1–21 (MASSLLILCLVLVSLASSALC). Positions 23–220 (APRRPVDVPF…WSKAPFVAEY (198 aa)) constitute a GH16 domain. The active-site Nucleophile is the Glu-106. The active-site Proton donor is the Glu-110. Glu-110 is a binding site for xyloglucan. A glycan (N-linked (GlcNAc...) asparagine) is linked at Asn-114. Xyloglucan contacts are provided by residues 123–125 (QTN), 133–135 (DRE), 199–200 (DW), and Gly-204. 2 disulfides stabilise this stretch: Cys-228–Cys-237 and Cys-274–Cys-287. Arg-279 is a binding site for xyloglucan.

It belongs to the glycosyl hydrolase 16 family. XTH group 1 subfamily. Post-translationally, contains at least one intrachain disulfide bond essential for its enzymatic activity. Predominantly expressed in the phloem fibers of growing internodes. Weakly or not expressed in the xylem. In the internode, it is expressed closer to the bottom of the internode compared to XTHA.

It is found in the secreted. The protein resides in the cell wall. It localises to the extracellular space. Its subcellular location is the apoplast. It catalyses the reaction breaks a beta-(1-&gt;4) bond in the backbone of a xyloglucan and transfers the xyloglucanyl segment on to O-4 of the non-reducing terminal glucose residue of an acceptor, which can be a xyloglucan or an oligosaccharide of xyloglucan.. Functionally, catalyzes xyloglucan endohydrolysis (XEH) and/or endotransglycosylation (XET). Cleaves and religates xyloglucan polymers, an essential constituent of the primary cell wall, and thereby participates in cell wall construction of growing tissues. This is Probable xyloglucan endotransglucosylase/hydrolase protein B (XTHB) from Phaseolus angularis (Azuki bean).